Reading from the N-terminus, the 114-residue chain is Dihydroneopterin monophosphate aldolase (114 aa).

Zn(2+)-binding residues include H15, H26, and H28.

This sequence belongs to the PTPS family. Requires Zn(2+) as cofactor.

The enzyme catalyses 7,8-dihydroneopterin 3'-phosphate = glycolaldehyde phosphate + 6-hydroxymethyl-7,8-dihydropterin. Functionally, catalyzes the conversion of 7,8-dihydroneopterin monophosphate (H2NMP) to 6-hydroxymethyl-7,8-dihydropterin (6-HMD). Cannot use 7,8-dihydroneopterin (H2Neo) or 7,8-dihydroneopterin triphosphate (H2NTP) as substrate. The protein is Dihydroneopterin monophosphate aldolase of Pyrococcus furiosus (strain ATCC 43587 / DSM 3638 / JCM 8422 / Vc1).